A 421-amino-acid polypeptide reads, in one-letter code: Phosphoribosylamine--glycine ligase (421 aa).

The ATP-grasp domain occupies 108 to 314; that stretch reads KEIMVKYNVP…FAQNIDDIMM (207 aa). 134-195 contacts ATP; that stretch reads IEEQGAPIVV…EEFLDGEEFS (62 aa). Mg(2+) contacts are provided by glutamate 284 and asparagine 286.

The protein belongs to the GARS family. Requires Mg(2+) as cofactor. The cofactor is Mn(2+).

The catalysed reaction is 5-phospho-beta-D-ribosylamine + glycine + ATP = N(1)-(5-phospho-beta-D-ribosyl)glycinamide + ADP + phosphate + H(+). It participates in purine metabolism; IMP biosynthesis via de novo pathway; N(1)-(5-phospho-D-ribosyl)glycinamide from 5-phospho-alpha-D-ribose 1-diphosphate: step 2/2. This is Phosphoribosylamine--glycine ligase from Streptococcus pyogenes serotype M18 (strain MGAS8232).